The primary structure comprises 373 residues: P2Y purinoceptor 1 (373 aa).

Topologically, residues 1 to 51 are extracellular; it reads MTEVPWSAVPNGTDAAFLAGLGSLWGNSTIASTAAVSSSFRCALIKTGFQF. N-linked (GlcNAc...) asparagine glycans are attached at residues asparagine 11 and asparagine 27. 2 disulfide bridges follow: cysteine 42/cysteine 296 and cysteine 124/cysteine 202. Position 46 (lysine 46) interacts with ADP. Residues 52–74 form a helical membrane-spanning segment; that stretch reads YYLPAVYILVFIIGFLGNSVAIW. The Cytoplasmic portion of the chain corresponds to 75–87; sequence MFVFHMKPWSGIS. Residues 88–109 traverse the membrane as a helical segment; it reads VYMFNLALADFLYVLTLPALIF. The Extracellular portion of the chain corresponds to 110-125; the sequence is YYFNKTDWIFGDVMCK. Asparagine 113 carries an N-linked (GlcNAc...) asparagine glycan. A helical transmembrane segment spans residues 126-147; sequence LQRFIFHVNLYGSILFLTCISA. The Cytoplasmic segment spans residues 148-166; that stretch reads HRYSGVVYPLKSLGRLKKK. A helical membrane pass occupies residues 167–188; it reads NAIYVSVLVWLIVVVAISPILF. At 189–214 the chain is on the extracellular side; the sequence is YSGTGIRKNKTVTCYDSTSDEYLRSY. N-linked (GlcNAc...) asparagine glycosylation is present at asparagine 197. Residue 203–205 coordinates ADP; that stretch reads YDS. The chain crosses the membrane as a helical span at residues 215–237; the sequence is FIYSMCTTVAMFCIPLVLILGCY. Topologically, residues 238–260 are cytoplasmic; the sequence is GLIVRALIYKDLDNSPLRRKSIY. The chain crosses the membrane as a helical span at residues 261-284; the sequence is LVIIVLTVFAVSYIPFHVMKTMNL. ADP-binding positions include 283–287, 303–306, and arginine 310; these read NLRAR and YATY. Residues 285-303 are Extracellular-facing; the sequence is RARLDFQTPEMCDFNDRVY. Residues 304-325 traverse the membrane as a helical segment; the sequence is ATYQVTRGLASLNSCVDPILYF. Topologically, residues 326–373 are cytoplasmic; sequence LAGDTFRRRLSRATRKASRRSEANLQSKSEEMTLNILSEFKQNGDTSL.

It belongs to the G-protein coupled receptor 1 family. As to expression, expressed in muscle, heart, liver, kidney, lung, brain, spleen, but not in testis.

It is found in the cell membrane. In terms of biological role, receptor for extracellular adenine nucleotides such as ADP. In platelets, binding to ADP leads to mobilization of intracellular calcium ions via activation of phospholipase C, a change in platelet shape, and ultimately platelet aggregation. This Rattus norvegicus (Rat) protein is P2Y purinoceptor 1 (P2ry1).